We begin with the raw amino-acid sequence, 61 residues long: Large ribosomal subunit protein uL30 (61 aa).

This sequence belongs to the universal ribosomal protein uL30 family. Part of the 50S ribosomal subunit.

This is Large ribosomal subunit protein uL30 from Corynebacterium diphtheriae (strain ATCC 700971 / NCTC 13129 / Biotype gravis).